We begin with the raw amino-acid sequence, 503 residues long: N-fatty-acyl-amino acid synthase/hydrolase PM20D1 (503 aa).

The N-terminal stretch at 1-24 is a signal peptide; sequence MAELLASLPAWAAVLLLFFATVSG. The N-linked (GlcNAc...) asparagine glycan is linked to N72. H125 lines the Zn(2+) pocket. The active site involves D127. Zn(2+) is bound at residue D157. Catalysis depends on E191, which acts as the Proton acceptor. 2 residues coordinate Zn(2+): E192 and D218. N-linked (GlcNAc...) asparagine glycosylation occurs at N443. H465 lines the Zn(2+) pocket.

It belongs to the peptidase M20A family. The cofactor is Zn(2+). In addition to being detected in blood (at protein level), PM20D1 is also highly expressed in other tissues including brown adipocytes, liver and kidney. It is also expressed in small intestine, large intestine, heart and pancreas.

The protein resides in the secreted. The enzyme catalyses an N-acyl-L-amino acid + H2O = an L-alpha-amino acid + a carboxylate. It catalyses the reaction an N-acyl-aromatic L-alpha-amino acid + H2O = an aromatic L-alpha-amino acid + a carboxylate. The catalysed reaction is N-(5Z,8Z,11Z,14Z)-eicosatetraenoyl-glycine + H2O = (5Z,8Z,11Z,14Z)-eicosatetraenoate + glycine. It carries out the reaction N-hexadecanoyl-L-phenylalanine + H2O = hexadecanoate + L-phenylalanine. The enzyme catalyses N-octadecanoyl-L-phenylalanine + H2O = octadecanoate + L-phenylalanine. It catalyses the reaction N-(4Z,7Z,10Z,13Z,16Z,19Z-docosahexaenoyl)-L-phenylalanine + H2O = (4Z,7Z,10Z,13Z,16Z,19Z)-docosahexaenoate + L-phenylalanine. The catalysed reaction is N-(9Z-octadecenoyl)-L-asparagine + H2O = L-asparagine + (9Z)-octadecenoate. It carries out the reaction (9Z)-octadecenoate + glycine = N-(9Z-octadecenoyl)glycine + H2O. The enzyme catalyses N-(9Z-octadecenoyl)-L-lysine + H2O = L-lysine + (9Z)-octadecenoate. It catalyses the reaction N-(9Z-octadecenoyl)-L-methionine + H2O = (9Z)-octadecenoate + L-methionine. The catalysed reaction is N-(9Z-octadecenoyl)-L-serine + H2O = L-serine + (9Z)-octadecenoate. It carries out the reaction N-(9Z-octadecenoyl)-L-tryptophan + H2O = L-tryptophan + (9Z)-octadecenoate. The enzyme catalyses N-(9Z-octadecenoyl)-L-tyrosine + H2O = L-tyrosine + (9Z)-octadecenoate. It catalyses the reaction N-(9Z-octadecenoyl)-L-glutamine + H2O = L-glutamine + (9Z)-octadecenoate. The catalysed reaction is N-(5Z,8Z,11Z,14Z-eicosatetraenoyl)-L-serine + H2O = (5Z,8Z,11Z,14Z)-eicosatetraenoate + L-serine. It carries out the reaction (5Z,8Z,11Z,14Z)-eicosatetraenoate + L-phenylalanine = N-(5Z,8Z,11Z,14Z-eicosatetraenoyl)-L-phenylalanine + H2O. The enzyme catalyses N-(9Z-octadecenoyl)-L-leucine + H2O = L-leucine + (9Z)-octadecenoate. It catalyses the reaction L-phenylalanine + (9Z)-octadecenoate = N-(9Z-octadecenoyl)-L-phenylalanine + H2O. It participates in amino-acid metabolism. It functions in the pathway energy metabolism; electron transfer. Its pathway is lipid metabolism; fatty acid metabolism. With respect to regulation, lipoproteins are powerful coactivators of PM20D1 activity in vitro and NAA biosynthesis in vivo. Its function is as follows. Secreted enzyme that regulates the endogenous N-fatty acyl amino acid (NAAs) tissue and circulating levels by functioning as a bidirectional NAA synthase/hydrolase. It condenses free fatty acids and free amino acids to generate NAAs and bidirectionally catalyzes the reverse hydrolysis reaction. Some of these NAAs stimulate oxidative metabolism via mitochondrial uncoupling, increasing energy expenditure in a UPC1-independent manner. Thereby, this secreted protein may indirectly regulate whole body energy expenditure. PM20D1 circulates in tight association with both low- and high-density (LDL and HDL,respectively) lipoprotein particles. The sequence is that of N-fatty-acyl-amino acid synthase/hydrolase PM20D1 from Mus musculus (Mouse).